Consider the following 587-residue polypeptide: Arginine--tRNA ligase (587 aa).

The short motif at 126–136 is the 'HIGH' region element; sequence ANPTGPLHVGH.

This sequence belongs to the class-I aminoacyl-tRNA synthetase family. As to quaternary structure, monomer.

Its subcellular location is the cytoplasm. The enzyme catalyses tRNA(Arg) + L-arginine + ATP = L-arginyl-tRNA(Arg) + AMP + diphosphate. In Azoarcus sp. (strain BH72), this protein is Arginine--tRNA ligase.